A 60-amino-acid chain; its full sequence is DNA gyrase inhibitor YacG (60 aa).

Zn(2+) is bound by residues cysteine 15, cysteine 18, cysteine 30, and cysteine 34.

The protein belongs to the DNA gyrase inhibitor YacG family. As to quaternary structure, interacts with GyrB. Requires Zn(2+) as cofactor.

In terms of biological role, inhibits all the catalytic activities of DNA gyrase by preventing its interaction with DNA. Acts by binding directly to the C-terminal domain of GyrB, which probably disrupts DNA binding by the gyrase. This chain is DNA gyrase inhibitor YacG, found in Nitrobacter hamburgensis (strain DSM 10229 / NCIMB 13809 / X14).